Reading from the N-terminus, the 234-residue chain is Glucosamine-6-phosphate deaminase (234 aa).

Asp-62 (proton acceptor; for enolization step) is an active-site residue. Asn-128 functions as the For ring-opening step in the catalytic mechanism. His-130 serves as the catalytic Proton acceptor; for ring-opening step. Residue Glu-135 is the For ring-opening step of the active site.

It belongs to the glucosamine/galactosamine-6-phosphate isomerase family. NagB subfamily.

The catalysed reaction is alpha-D-glucosamine 6-phosphate + H2O = beta-D-fructose 6-phosphate + NH4(+). Its pathway is amino-sugar metabolism; N-acetylneuraminate degradation; D-fructose 6-phosphate from N-acetylneuraminate: step 5/5. In terms of biological role, catalyzes the reversible isomerization-deamination of glucosamine 6-phosphate (GlcN6P) to form fructose 6-phosphate (Fru6P) and ammonium ion. This Lactobacillus delbrueckii subsp. bulgaricus (strain ATCC 11842 / DSM 20081 / BCRC 10696 / JCM 1002 / NBRC 13953 / NCIMB 11778 / NCTC 12712 / WDCM 00102 / Lb 14) protein is Glucosamine-6-phosphate deaminase.